Reading from the N-terminus, the 1251-residue chain is MPTINSFNYNDPVNNRTILYIKPGGCQQFYKSFNIMKNIWIIPERNVIGTIPQDFLPPTSLKNGDSSYYDPNYLQSDQEKDKFLKIVTKIFNRINDNLSGRILLEELSKANPYLGNDNTPDGDFIINDASAVPIQFSNGSQSILLPNVIIMGAEPDLFETNSSNISLRNNYMPSNHGFGSIAIVTFSPEYSFRFKDNSMNEFIQDPALTLMHELIHSLHGLYGAKGITTKYTITQKQNPLITNIRGTNIEEFLTFGGTDLNIITSAQSNDIYTNLLADYKKIASKLSKVQVSNPLLNPYKDVFEAKYGLDKDASGIYSVNINKFNDIFKKLYSFTEFDLATKFQVKCRQTYIGQYKYFKLSNLLNDSIYNISEGYNINNLKVNFRGQNANLNPRIITPITGRGLVKKIIRFCKNIVSVKGIRKSICIEINNGELFFVASENSYNDDNINTPKEIDDTVTSNNNYENDLDQVILNFNSESAPGLSDEKLNLTIQNDAYIPKYDSNGTSDIEQHDVNELNVFFYLDAQKVPEGENNVNLTSSIDTALLEQPKIYTFFSSEFINNVNKPVQAALFVGWIQQVLVDFTTEANQKSTVDKIADISIVVPYIGLALNIGNEAQKGNFKDALELLGAGILLEFEPELLIPTILVFTIKSFLGSSDNKNKVIKAINNALKERDEKWKEVYSFIVSNWMTKINTQFNKRKEQMYQALQNQVNALKAIIESKYNSYTLEEKNELTNKYDIEQIENELNQKVSIAMNNIDRFLTESSISYLMKLINEVKINKLREYDENVKTYLLDYIIKHGSILGESQQELNSMVIDTLNNSIPFKLSSYTDDKILISYFNKFFKRIKSSSVLNMRYKNDKYVDTSGYDSNININGDVYKYPTNKNQFGIYNDKLSEVNISQNDYIIYDNKYKNFSISFWVRIPNYDNKIVNVNNEYTIINCMRDNNSGWKVSLNHNEIIWTLQDNSGINQKLAFNYGNANGISDYINKWIFVTITNDRLGDSKLYINGNLIDKKSILNLGNIHVSDNILFKIVNCSYTRYIGIRYFNIFDKELDETEIQTLYNNEPNANILKDFWGNYLLYDKEYYLLNVLKPNNFINRRTDSTLSINNIRSTILLANRLYSGIKVKIQRVNNSSTNDNLVRKNDQVYINFVASKTHLLPLYADTATTNKEKTIKISSSGNRFNQVVVMNSVGNCTMNFKNNNGNNIGLLGFKADTVVASTWYYTHMRDNTNSNGFFWNFISEEHGWQEK.

A Zn(2+)-binding site is contributed by H212. E213 is a catalytic residue. Zn(2+) is bound by residues H216 and E251. Residues C412 and C426 are joined by a disulfide bond. The translocation domain (TD) stretch occupies residues 423-819 (KSICIEINNG…ELNSMVIDTL (397 aa)). Residues 466–515 (NDLDQVILNFNSESAPGLSDEKLNLTIQNDAYIPKYDSNGTSDIEQHDVN) form a belt region. Residues 845–1067 (KRIKSSSVLN…EIQTLYNNEP (223 aa)) are N-terminus of receptor binding domain (N-RBD). The segment at 1068–1251 (NANILKDFWG…ISEEHGWQEK (184 aa)) is C-terminus of receptor binding domain (C-RBD). The short motif at 1221–1224 (STWY) is the Host ganglioside-binding motif element.

This sequence belongs to the peptidase M27 family. Heterodimer; disulfide-linked heterodimer of a light chain (LC) and a heavy chain (HC). The LC has the proteolytic/pharmacological activity, while the N- and C-terminal of the HC mediate channel formation and toxin binding, respectively. Interacts with host synaptic vesicle glycoproteins SV2A and SV2B which probably serve as coreceptors. Requires Zn(2+) as cofactor.

The protein resides in the secreted. It is found in the host cytoplasm. The protein localises to the host cytosol. Its subcellular location is the host synapse. It localises to the host presynaptic cell membrane. The protein resides in the host cytoplasmic vesicle. It is found in the host secretory vesicle. The protein localises to the host synaptic vesicle membrane. The catalysed reaction is Limited hydrolysis of proteins of the neuroexocytosis apparatus, synaptobrevins, SNAP25 or syntaxin. No detected action on small molecule substrates.. Botulinum toxin causes flaccid paralysis by inhibiting neurotransmitter (acetylcholine) release from the presynaptic membranes of nerve terminals of eukaryotic host skeletal and autonomic nervous system, with frequent heart or respiratory failure. Precursor of botulinum neurotoxin E which has 2 coreceptors; complex polysialylated gangliosides found on neural tissue and specific membrane-anchored proteins found in synaptic vesicles. Receptor proteins are exposed on host presynaptic cell membrane during neurotransmitter release, when the toxin heavy chain (HC) binds to them. Upon synaptic vesicle recycling the toxin is taken up via the endocytic pathway. When the pH of the toxin-containing endosome drops a structural rearrangement occurs so that the N-terminus of the HC forms pores that allows the light chain (LC) to translocate into the cytosol. Once in the cytosol the disulfide bond linking the 2 subunits is reduced and LC cleaves its target protein on synaptic vesicles, preventing their fusion with the cytoplasmic membrane and thus neurotransmitter release. In terms of biological role, has proteolytic activity. After translocation into the eukaryotic host cytosol, LC hydrolyzes the '180-Arg-|-Ile-181' bond in SNAP25, blocking neurotransmitter release. Functionally, responsible for host epithelial cell transcytosis, host nerve cell targeting and translocation of light chain (LC) into host cytosol. Composed of 3 subdomains; the translocation domain (TD), and N-terminus and C-terminus of the receptor-binding domain (RBD). The RBD is responsible for the adherence of the toxin to the cell surface. It simultaneously recognizes 2 coreceptors; host polysialated gangliosides and the receptor proteins SV2A and SV2B in close proximity on host synaptic vesicles. Interaction with SV2 proteins requires SV2 glycosylation. The N-terminus of the TD wraps an extended belt around the perimeter of the LC, protecting Zn(2+) in the active site; it may also prevent premature LC dissociation from the translocation channel and protect toxin prior to translocation. The TD inserts into synaptic vesicle membrane to allow translocation into the host cytosol. Binds ganglioside GD1a in vitro. In Clostridium butyricum, this protein is Botulinum neurotoxin type E.